Here is a 304-residue protein sequence, read N- to C-terminus: Quinolinate synthase (304 aa).

The iminosuccinate site is built by H23 and S40. C85 is a binding site for [4Fe-4S] cluster. Residues 111-113 (YVN) and S128 each bind iminosuccinate. C171 is a [4Fe-4S] cluster binding site. Residues 197 to 199 (HPE) and T214 contribute to the iminosuccinate site. C259 provides a ligand contact to [4Fe-4S] cluster.

Belongs to the quinolinate synthase family. Type 2 subfamily. It depends on [4Fe-4S] cluster as a cofactor.

It localises to the cytoplasm. The catalysed reaction is iminosuccinate + dihydroxyacetone phosphate = quinolinate + phosphate + 2 H2O + H(+). It participates in cofactor biosynthesis; NAD(+) biosynthesis; quinolinate from iminoaspartate: step 1/1. In terms of biological role, catalyzes the condensation of iminoaspartate with dihydroxyacetone phosphate to form quinolinate. The polypeptide is Quinolinate synthase (Pelobacter propionicus (strain DSM 2379 / NBRC 103807 / OttBd1)).